We begin with the raw amino-acid sequence, 199 residues long: Holliday junction branch migration complex subunit RuvA (199 aa).

The tract at residues 1–63 (MIGCLIGEVF…EDAQQLYGFS (63 aa)) is domain I. A domain II region spans residues 64 to 142 (DAQEKTIFRT…TLAQGTSSAA (79 aa)). The tract at residues 143-150 (ALPQIQFV) is flexible linker. Positions 150 to 199 (VSNSPVAEAEAALQSLGYKPLEAQKAVAAVKADYTESADIIRAALKSMMK) are domain III.

It belongs to the RuvA family. As to quaternary structure, homotetramer. Forms an RuvA(8)-RuvB(12)-Holliday junction (HJ) complex. HJ DNA is sandwiched between 2 RuvA tetramers; dsDNA enters through RuvA and exits via RuvB. An RuvB hexamer assembles on each DNA strand where it exits the tetramer. Each RuvB hexamer is contacted by two RuvA subunits (via domain III) on 2 adjacent RuvB subunits; this complex drives branch migration. In the full resolvosome a probable DNA-RuvA(4)-RuvB(12)-RuvC(2) complex forms which resolves the HJ.

It localises to the cytoplasm. Functionally, the RuvA-RuvB-RuvC complex processes Holliday junction (HJ) DNA during genetic recombination and DNA repair, while the RuvA-RuvB complex plays an important role in the rescue of blocked DNA replication forks via replication fork reversal (RFR). RuvA specifically binds to HJ cruciform DNA, conferring on it an open structure. The RuvB hexamer acts as an ATP-dependent pump, pulling dsDNA into and through the RuvAB complex. HJ branch migration allows RuvC to scan DNA until it finds its consensus sequence, where it cleaves and resolves the cruciform DNA. The polypeptide is Holliday junction branch migration complex subunit RuvA (Acinetobacter baumannii (strain ACICU)).